A 464-amino-acid chain; its full sequence is UDP-N-acetylmuramate--L-alanine ligase (464 aa).

112 to 118 lines the ATP pocket; it reads GTHGKTT.

It belongs to the MurCDEF family.

The protein localises to the cytoplasm. It carries out the reaction UDP-N-acetyl-alpha-D-muramate + L-alanine + ATP = UDP-N-acetyl-alpha-D-muramoyl-L-alanine + ADP + phosphate + H(+). Its pathway is cell wall biogenesis; peptidoglycan biosynthesis. Cell wall formation. The chain is UDP-N-acetylmuramate--L-alanine ligase from Acidithiobacillus ferrooxidans (strain ATCC 23270 / DSM 14882 / CIP 104768 / NCIMB 8455) (Ferrobacillus ferrooxidans (strain ATCC 23270)).